Reading from the N-terminus, the 130-residue chain is uncharacterized protein (130 aa).

The segment at methionine 1–proline 104 is disordered. A compositionally biased stretch (low complexity) spans arginine 88–arginine 97.

This is an uncharacterized protein from Homo sapiens (Human).